The primary structure comprises 666 residues: DNA mismatch repair protein MutL (666 aa).

The protein belongs to the DNA mismatch repair MutL/HexB family.

This protein is involved in the repair of mismatches in DNA. It is required for dam-dependent methyl-directed DNA mismatch repair. May act as a 'molecular matchmaker', a protein that promotes the formation of a stable complex between two or more DNA-binding proteins in an ATP-dependent manner without itself being part of a final effector complex. This Clostridium botulinum (strain ATCC 19397 / Type A) protein is DNA mismatch repair protein MutL.